The chain runs to 23 residues: GLKEIFKAGLGSLVKGIAAHVAS.

A Serine amide modification is found at Ser23.

In terms of tissue distribution, expressed by the skin glands.

The protein localises to the secreted. It localises to the target cell membrane. Its function is as follows. Antibacterial peptide with amphipathic alpha-helical structure that shows selective growth-inhibitory activity against Gram-negative bacteria but low hemolytic activity against human erythrocytes (LC(50)=145-220 uM). It is moderately active against the Gram-negative bacteria E.coli (MIC=25 uM), K.pneumoniae (MIC=50 uM), P.aeruginosa (MIC=25 uM), A.baumannii (MIC=6 uM), and is weaky active against the Gram-positive S.aureus (MIC=100-250 uM). This is Alyteserin-1c from Alytes obstetricans (Common midwife toad).